Reading from the N-terminus, the 59-residue chain is Bdellastasin (59 aa).

Intrachain disulfides connect Cys10-Cys21, Cys15-Cys26, Cys28-Cys48, Cys33-Cys52, and Cys37-Cys54. Residues 28–54 form the Antistasin-like domain; sequence CSDLHCKVKCEHGFKKDDNGCEYACIC.

Its subcellular location is the secreted. Functionally, strong inhibitor of mammalian trypsin, plasmin and acrosin. This Hirudo medicinalis (Medicinal leech) protein is Bdellastasin.